Consider the following 454-residue polypeptide: Tol-Pal system protein TolB (454 aa).

The first 30 residues, 1-30 (MNDARSITRRRFMTLTGSGLAMLGGGHAFA), serve as a signal peptide directing secretion.

It belongs to the TolB family. As to quaternary structure, the Tol-Pal system is composed of five core proteins: the inner membrane proteins TolA, TolQ and TolR, the periplasmic protein TolB and the outer membrane protein Pal. They form a network linking the inner and outer membranes and the peptidoglycan layer.

Its subcellular location is the periplasm. Part of the Tol-Pal system, which plays a role in outer membrane invagination during cell division and is important for maintaining outer membrane integrity. The sequence is that of Tol-Pal system protein TolB from Bradyrhizobium diazoefficiens (strain JCM 10833 / BCRC 13528 / IAM 13628 / NBRC 14792 / USDA 110).